We begin with the raw amino-acid sequence, 386 residues long: Homoserine O-succinyltransferase (386 aa).

Residues N49–L358 form the AB hydrolase-1 domain. The active-site Nucleophile is the S156. R226 serves as a coordination point for substrate. Catalysis depends on residues D321 and H354. Residue D355 participates in substrate binding.

The protein belongs to the AB hydrolase superfamily. MetX family. As to quaternary structure, homodimer.

It is found in the cytoplasm. It carries out the reaction L-homoserine + succinyl-CoA = O-succinyl-L-homoserine + CoA. Its pathway is amino-acid biosynthesis; L-methionine biosynthesis via de novo pathway; O-succinyl-L-homoserine from L-homoserine: step 1/1. Transfers a succinyl group from succinyl-CoA to L-homoserine, forming succinyl-L-homoserine. The protein is Homoserine O-succinyltransferase of Acinetobacter baumannii (strain ACICU).